The primary structure comprises 507 residues: ATP synthase subunit alpha, chloroplastic (507 aa).

170-177 is an ATP binding site; it reads GDRQTGKT. Residue threonine 257 is modified to Phosphothreonine.

Belongs to the ATPase alpha/beta chains family. F-type ATPases have 2 components, CF(1) - the catalytic core - and CF(0) - the membrane proton channel. CF(1) has five subunits: alpha(3), beta(3), gamma(1), delta(1), epsilon(1). CF(0) has four main subunits: a, b, b' and c.

The protein resides in the plastid. It is found in the chloroplast thylakoid membrane. The catalysed reaction is ATP + H2O + 4 H(+)(in) = ADP + phosphate + 5 H(+)(out). In terms of biological role, produces ATP from ADP in the presence of a proton gradient across the membrane. The alpha chain is a regulatory subunit. The protein is ATP synthase subunit alpha, chloroplastic of Capsella bursa-pastoris (Shepherd's purse).